A 492-amino-acid polypeptide reads, in one-letter code: MWRGLWTLAAQAARGPRRLCTRRSSGAPAPGSGATIFALSSGQGRCGIAVIRTSGPASGHALRILTAPRDLPLARHASLRLLSDPRSGEPLDRALVLWFPGPQSFTGEDCVEFHVHGGPAVVSGVLQALGSVPGLRPAEAGEFTRRAFANGKLNLTEVEGLADLIHAETEAQRRQALRQLDGELGHLCRGWAETLTKALAHVEAYIDFGEDDNLEEGVLEQADIEVRALQVALGAHLRDARRGQRLRSGVHVVVTGPPNAGKSSLVNLLSRKPVSIVSPEPGTTRDVLETPVDLAGFPVLLSDTAGLREGVGPVEQEGVRRARERLEQADLILAMLDASDLASPSSCNFLATVVASVGAQSPSDSSQRLLLVLNKSDLLSPEGPGPGPDLPPHLLLSCLTGEGLDGLLEALRKELAAVCGDPSTDPPLLTRARHQHHLQGCLDALGHYKQSKDLALAAEALRVARGHLTRLTGGGGTEEILDIIFQDFCVGK.

The N-terminal 20 residues, 1 to 20 (MWRGLWTLAAQAARGPRRLC), are a transit peptide targeting the mitochondrion. 5,10-methylenetetrahydrofolate-binding residues include Arg-52, Glu-112, and Lys-152. The region spanning 249–416 (GVHVVVTGPP…LLEALRKELA (168 aa)) is the TrmE-type G domain. Residues 256-263 (GPPNAGKS), 282-286 (GTTRD), 303-306 (DTAG), 374-377 (NKSD), and 397-399 (SCL) contribute to the GTP site. K(+) is bound at residue Asn-259. 2 residues coordinate Mg(2+): Ser-263 and Thr-284. Lys-492 lines the 5,10-methylenetetrahydrofolate pocket.

This sequence belongs to the TRAFAC class TrmE-Era-EngA-EngB-Septin-like GTPase superfamily. TrmE GTPase family. In terms of assembly, homodimer; forms a dimer in the presence of potassium. Interacts with MTO1; forms the GTPBP3-MTO1 complex composed of homodimers of GTPBP3 and MTO1. As to quaternary structure, homodimer, forms homodimer in vivo. K(+) serves as cofactor. As to expression, ubiquitously expressed.

The protein localises to the mitochondrion. It localises to the cytoplasm. The enzyme catalyses GTP + H2O = GDP + phosphate + H(+). In terms of biological role, GTPase component of the GTPBP3-MTO1 complex that catalyzes the 5-taurinomethyluridine (taum(5)U) modification at the 34th wobble position (U34) of mitochondrial tRNAs (mt-tRNAs), which plays a role in mt-tRNA decoding and mitochondrial translation. Taum(5)U formation on mammalian mt-tRNA requires the presence of both GTPBP3-mediated GTPase activity and MTO1 catalytic activity. This Homo sapiens (Human) protein is 5-taurinomethyluridine-[tRNA] synthase subunit GTPB3, mitochondrial.